Reading from the N-terminus, the 752-residue chain is THO complex subunit HPR1 (752 aa).

Ser-234 is subject to Phosphoserine. The disordered stretch occupies residues 648–752; it reads RKKRALEEEA…SNGSSTQDMK (105 aa). Residues 692-702 are compositionally biased toward basic and acidic residues; it reads EISEENTKIKS. The span at 720–752 shows a compositional bias: polar residues; it reads PQNTTAQLENPKTEDNNAATSNISNGSSTQDMK.

As to quaternary structure, component of the THO complex, which is composed of HPR1, MFT1, THO2 and THP2. Together with SUB2, TEX1 and YRA1, THO forms the transcription/export (TREX) complex. THO associates with DNA and RNA in vitro.

It is found in the nucleus. In terms of biological role, component the THO subcomplex of the TREX complex, which operates in coupling transcription elongation to mRNA export. The THO complex is recruited to transcribed genes and moves along the gene with the elongating polymerase during transcription. THO is important for stabilizing nascent RNA in the RNA polymerase II elongation complex by preventing formation of DNA:RNA hybrids behind the elongating polymerase. It functions in cotranscriptional formation of an export-competent messenger ribonucleoprotein particle (mRNP) by facilitating the loading of ATP-dependent RNA helicase SUB2 and the mRNA export factor YRA1 along the nascent mRNA. The polypeptide is THO complex subunit HPR1 (HPR1) (Saccharomyces cerevisiae (strain ATCC 204508 / S288c) (Baker's yeast)).